The sequence spans 474 residues: 6-phospho-beta-glucosidase AscB (474 aa).

Glu-180 acts as the Proton donor in catalysis. Glu-372 acts as the Nucleophile in catalysis.

This sequence belongs to the glycosyl hydrolase 1 family.

The enzyme catalyses 6-phospho-beta-D-glucosyl-(1-&gt;4)-D-glucose + H2O = D-glucose 6-phosphate + D-glucose. In terms of biological role, can hydrolyze salicin, cellobiose, and probably arbutin. This Escherichia coli (strain K12) protein is 6-phospho-beta-glucosidase AscB (ascB).